Reading from the N-terminus, the 471-residue chain is 3-isopropylmalate dehydratase large subunit (471 aa).

Positions 347, 407, and 410 each coordinate [4Fe-4S] cluster.

The protein belongs to the aconitase/IPM isomerase family. LeuC type 1 subfamily. As to quaternary structure, heterodimer of LeuC and LeuD. Requires [4Fe-4S] cluster as cofactor.

It carries out the reaction (2R,3S)-3-isopropylmalate = (2S)-2-isopropylmalate. The protein operates within amino-acid biosynthesis; L-leucine biosynthesis; L-leucine from 3-methyl-2-oxobutanoate: step 2/4. Functionally, catalyzes the isomerization between 2-isopropylmalate and 3-isopropylmalate, via the formation of 2-isopropylmaleate. In Buchnera aphidicola subsp. Acyrthosiphon pisum (strain APS) (Acyrthosiphon pisum symbiotic bacterium), this protein is 3-isopropylmalate dehydratase large subunit.